Consider the following 402-residue polypeptide: Odorant receptor 22c (402 aa).

Residues 1 to 42 lie on the Cytoplasmic side of the membrane; it reads MTDSGQPAIADHFYRIPRISGLIVGLWPQRIRGGGGRPWHAH. The helical transmembrane segment at 43–63 threads the bilayer; sequence LLFVFAFAMVVVGAVGEVSYG. The Extracellular segment spans residues 64-73; that stretch reads CVHLDNLVVA. A helical membrane pass occupies residues 74-94; it reads LEAFCPGTTKAVCVLKLWVFF. Residues 95-134 are Cytoplasmic-facing; the sequence is RSNRRWAELVQRLRAILWESRRQEAQRMLVGLATTANRLS. A helical transmembrane segment spans residues 135–155; sequence LLLLSSGTATNAAFTLQPLIM. Over 156–173 the chain is Extracellular; it reads GLYRWIVQLPGQTELPFN. Residues 174–194 form a helical membrane-spanning segment; that stretch reads IILPSFAVQPGVFPLTYVLLT. The Cytoplasmic segment spans residues 195-201; it reads ASGACTV. A helical transmembrane segment spans residues 202 to 222; it reads FAFSFVDGFFICSCLYICGAF. At 223–276 the chain is on the extracellular side; sequence RLVQQDIRRIFADLHGDSVDVFTEEMNAEVRHRLAQVVERHNAIIDFCTDLTRQ. A helical membrane pass occupies residues 277 to 297; it reads FTVIVLMHFLSAAFVLCSTIL. The Cytoplasmic segment spans residues 298 to 307; that stretch reads DIMLNTSSLS. The chain crosses the membrane as a helical span at residues 308–328; sequence GLTYICYIIAALTQLFLYCFG. Over 329-402 the chain is Extracellular; the sequence is GNHVSESSAA…SYITLLKTFL (74 aa).

Belongs to the insect chemoreceptor superfamily. Heteromeric odorant receptor channel (TC 1.A.69) family. Or1a subfamily. In terms of assembly, interacts with Orco. Complexes exist early in the endomembrane system in olfactory sensory neurons (OSNs), coupling these complexes to the conserved ciliary trafficking pathway. As to expression, not expressed in either the antenna or maxillary palp.

Its subcellular location is the cell membrane. Odorant receptor which mediates acceptance or avoidance behavior, depending on its substrates. The odorant receptor repertoire encodes a large collection of odor stimuli that vary widely in identity, intensity, and duration. May form a complex with Orco to form odorant-sensing units, providing sensitive and prolonged odorant signaling and calcium permeability. The sequence is that of Odorant receptor 22c (Or22c) from Drosophila melanogaster (Fruit fly).